The chain runs to 172 residues: Small ribosomal subunit protein uS5 (172 aa).

Residues 11–74 (LSEVLVDVNR…QAAKKRMMKV (64 aa)) enclose the S5 DRBM domain.

It belongs to the universal ribosomal protein uS5 family. Part of the 30S ribosomal subunit. Contacts proteins S4 and S8.

Its function is as follows. With S4 and S12 plays an important role in translational accuracy. Functionally, located at the back of the 30S subunit body where it stabilizes the conformation of the head with respect to the body. In Rickettsia canadensis (strain McKiel), this protein is Small ribosomal subunit protein uS5.